The sequence spans 133 residues: Small ribosomal subunit protein uS8 (133 aa).

The interval 1-28 (MANHDPISDMLTRIRNASEKRHEKTKVP) is disordered. The segment covering 16–26 (NASEKRHEKTK) has biased composition (basic and acidic residues).

Belongs to the universal ribosomal protein uS8 family. As to quaternary structure, part of the 30S ribosomal subunit. Contacts proteins S5 and S12.

One of the primary rRNA binding proteins, it binds directly to 16S rRNA central domain where it helps coordinate assembly of the platform of the 30S subunit. In Prochlorococcus marinus (strain NATL2A), this protein is Small ribosomal subunit protein uS8.